Here is a 548-residue protein sequence, read N- to C-terminus: Probable malate:quinone oxidoreductase (548 aa).

A disordered region spans residues 522–548 (KPQAADSTPKPQLKPKPVQKEVADIAL). A compositionally biased stretch (basic and acidic residues) spans 539 to 548 (VQKEVADIAL).

This sequence belongs to the MQO family. FAD serves as cofactor.

The enzyme catalyses (S)-malate + a quinone = a quinol + oxaloacetate. It functions in the pathway carbohydrate metabolism; tricarboxylic acid cycle; oxaloacetate from (S)-malate (quinone route): step 1/1. In Escherichia coli O9:H4 (strain HS), this protein is Probable malate:quinone oxidoreductase.